The sequence spans 118 residues: UPF0102 protein PC1_0307 (118 aa).

The protein belongs to the UPF0102 family.

This Pectobacterium carotovorum subsp. carotovorum (strain PC1) protein is UPF0102 protein PC1_0307.